The sequence spans 153 residues: ATP synthase subunit a (153 aa).

A run of 2 helical transmembrane segments spans residues A43–F63 and I104–I124.

The protein belongs to the ATPase A chain family. In terms of assembly, F-type ATPases have 2 components, CF(1) - the catalytic core - and CF(0) - the membrane proton channel. CF(1) has five subunits: alpha(3), beta(3), gamma(1), delta(1), epsilon(1). CF(0) has three main subunits: a(1), b(2) and c(9-12). The alpha and beta chains form an alternating ring which encloses part of the gamma chain. CF(1) is attached to CF(0) by a central stalk formed by the gamma and epsilon chains, while a peripheral stalk is formed by the delta and b chains.

It localises to the cell inner membrane. Its function is as follows. Key component of the proton channel; it plays a direct role in the translocation of protons across the membrane. The protein is ATP synthase subunit a (atpB) of Pseudomonas putida (Arthrobacter siderocapsulatus).